The chain runs to 736 residues: MNATIKEIALPNKTETFEFGAIAKQANGSVLYRCGKSVLLASVCYESDERVKEDFLPLTVQYIEKSYAAGKFPGGFIKRESKPGDFETLTSRIIDRSLRPLFPKGYAHPTQITVMVLSAQNDADLQTMALNAASAALFVSDIPLRKPVHGLRIGKINGALVVNPTTKEMSESTLDLFVSGVEEDLLMIEMRTLASDEINNTCFVGDCGMVAASASDILKIHQANEMKEEELLEALELAKTSIKKASACYVEAFTPLAKPDAILELKPDITSSEIYQYIKENHAIAIKEAITRMAKSERHSDLKRIAKEIASSERAQESEWSFEAVYETVGKYKREAVRALILEERRRADGRGLKEVRPIDIQTNILPNAHASALFTRGETQALVVATLGGDMDAQSYELLTEKGSSKERFMVHYNFPSFSVGEAGMVGAPGRRELGHGNLAKRALEPTIEEWGAQTIRLVSEILESNGSSSMATVCGGSLALKAAGINTTALVAGVAMGLIVEAEKHAILTDIMGLEDHDGDMDFKIAGTSTGITAMQMDIKLGGLSMEILKEALYQAKEGREHILGIMEKAQSEIIINDEILPSLQIFSINPGRIVDIIGQAGKTIKEIIERFEVAIDLNRDNGEVKVTGSNKQKVEAAKEHILSISNQEAPQRVRVADVYSAGEVFKGKVKKIVDFGAFIELPKGGDGLLHVSKIVQHRDQRIDEVIKEGEEIEVQILSINKNKVELGRATRPN.

Mg(2+) is bound by residues D518 and D524. Residues 584–644 form the KH domain; it reads PSLQIFSINP…QKVEAAKEHI (61 aa). The 68-residue stretch at 665–732 folds into the S1 motif domain; it reads GEVFKGKVKK…NKNKVELGRA (68 aa).

The protein belongs to the polyribonucleotide nucleotidyltransferase family. It depends on Mg(2+) as a cofactor.

The protein resides in the cytoplasm. It catalyses the reaction RNA(n+1) + phosphate = RNA(n) + a ribonucleoside 5'-diphosphate. In terms of biological role, involved in mRNA degradation. Catalyzes the phosphorolysis of single-stranded polyribonucleotides processively in the 3'- to 5'-direction. The polypeptide is Polyribonucleotide nucleotidyltransferase (Wolinella succinogenes (strain ATCC 29543 / DSM 1740 / CCUG 13145 / JCM 31913 / LMG 7466 / NCTC 11488 / FDC 602W) (Vibrio succinogenes)).